The following is a 391-amino-acid chain: Probable tRNA sulfurtransferase (391 aa).

The THUMP domain occupies 60–167 (DETVAALQRV…NKAYVYSNTL (108 aa)). ATP is bound by residues 184 to 185 (LL), 209 to 210 (YF), Arg-266, Gly-288, and Gln-297.

The protein belongs to the ThiI family.

The protein localises to the cytoplasm. The enzyme catalyses [ThiI sulfur-carrier protein]-S-sulfanyl-L-cysteine + a uridine in tRNA + 2 reduced [2Fe-2S]-[ferredoxin] + ATP + H(+) = [ThiI sulfur-carrier protein]-L-cysteine + a 4-thiouridine in tRNA + 2 oxidized [2Fe-2S]-[ferredoxin] + AMP + diphosphate. It carries out the reaction [ThiS sulfur-carrier protein]-C-terminal Gly-Gly-AMP + S-sulfanyl-L-cysteinyl-[cysteine desulfurase] + AH2 = [ThiS sulfur-carrier protein]-C-terminal-Gly-aminoethanethioate + L-cysteinyl-[cysteine desulfurase] + A + AMP + 2 H(+). Its pathway is cofactor biosynthesis; thiamine diphosphate biosynthesis. Catalyzes the ATP-dependent transfer of a sulfur to tRNA to produce 4-thiouridine in position 8 of tRNAs, which functions as a near-UV photosensor. Also catalyzes the transfer of sulfur to the sulfur carrier protein ThiS, forming ThiS-thiocarboxylate. This is a step in the synthesis of thiazole, in the thiamine biosynthesis pathway. The sulfur is donated as persulfide by IscS. This is Probable tRNA sulfurtransferase from Lachnoclostridium phytofermentans (strain ATCC 700394 / DSM 18823 / ISDg) (Clostridium phytofermentans).